Here is a 337-residue protein sequence, read N- to C-terminus: Protein MICROTUBULE BINDING PROTEIN 2C (337 aa).

The interval R80–R147 is disordered. The span at P89–G103 shows a compositional bias: basic and acidic residues. The segment covering K120–L142 has biased composition (polar residues). Coiled coils occupy residues T143–D194, V223–E250, and L294–N314.

It belongs to the microtubule binding protein 2C family. As to quaternary structure, interacts with KN-1. Binds to tobacco mosaic virus movement protein (TMV-MP) at microtubules. Constitutively expressed in leaves.

Its subcellular location is the cytoplasm. The protein resides in the cytoskeleton. Prevents homeodomain proteins (e.g. STM) association to plasmodesmata and, consequently, cell-to-cell transport. Binds to RNA. Alters KN1 RNA-binding capacity. Regulates cytoskeleton (e.g. actin) organization that determinates cell shape. Interferes with cell-to-cell transport of tobacco mosaic virus movement protein (TMV-MP) by mediating its accumulation at microtubules, thus interfering with cell-to-cell virus movement. The polypeptide is Protein MICROTUBULE BINDING PROTEIN 2C (Nicotiana tabacum (Common tobacco)).